We begin with the raw amino-acid sequence, 511 residues long: FAD-dependent monooxygenase AOL_s00215g279 (511 aa).

A signal peptide spans 1–17 (MRFTLYGLLGFASLLHA). The 172-residue stretch at 85–256 (CWVNPACIVS…TEFDLRTRYS (172 aa)) folds into the FAD-binding PCMH-type domain. H122 carries the pros-8alpha-FAD histidine modification.

It belongs to the oxygen-dependent FAD-linked oxidoreductase family.

It participates in secondary metabolite biosynthesis; terpenoid biosynthesis. In terms of biological role, FAD-dependent monooxygenase; part of the gene cluster that mediates the biosynthesis of sesquiterpenyl epoxy-cyclohexenoids (SECs) such as anthrobotrisins and arthrosporols, metabolites that possess a novel hybrid carbon skeleton consisting of a polyketide-derived epoxycyclohexenol combined with a terpenoid-derived monocyclic sesquiterpenol substructure (PKS-PTS hybrid). The SEC pathway plays an important role for fungal soil colonization via decreasing fungal nematode-capturing ability. Within the pathway, the FAD-dependent monooxygenase AOL_s00215g279 plays a role in the oxygenation of the phenol moiety, most likely in the epoxy formation. The pathway begins with the biosynthesis of 6-methylsalicylic acid (6-MSA), the first precursor of the polyketide-derived epoxycyclohexenol in arthrosporols, by the polyketide synthase (PKS) AOL_s00215g283 via condensation of 1 acetate and 3 malonate units. The 6-methylsalicylic acid decarboxylase AOL_s00215g281 then catalyzes the decarboxylation of 6-methylsalicylic acid to yield m-cresol. The cytochrome P450 monooxygenase AOL_s00215g282 further oxidizes m-cresol to yield toluquinol. With the assistance of the oxidoreductase AOL_s00215g277, the polyprenyl transferase AOL_s00215g276 catalyzes the farnesylation of toluquinol to produce farnesyl hydroquinone, the hybrid precursor for biosynthesis of SECs. Farnesyl hydroquinone undergoes epoxidation and then subsequent dehydrogenation to form farnesyl epoxy-quinone, the first and simplest SEC. The cytochrome P450 monooxygenase AOL_s00215g278 and the FAD-dependent monooxygenase AOL_s00215g279 might be involved in the oxygenation of the phenol moiety, most likely in the epoxy formation. The cytochrome P450 monooxygenases AOL_s00215g274 and AOL_s00215g280 are involved in specific regional ketone reductions at respectively C-4 and C-1 of farnesyl epoxy-quinone PubMed:33823587. The sequence is that of FAD-dependent monooxygenase AOL_s00215g279 from Arthrobotrys oligospora (strain ATCC 24927 / CBS 115.81 / DSM 1491) (Nematode-trapping fungus).